The following is a 157-amino-acid chain: Small ribosomal subunit protein uS7 (157 aa).

The protein belongs to the universal ribosomal protein uS7 family. As to quaternary structure, part of the 30S ribosomal subunit. Contacts proteins S9 and S11.

Its function is as follows. One of the primary rRNA binding proteins, it binds directly to 16S rRNA where it nucleates assembly of the head domain of the 30S subunit. Is located at the subunit interface close to the decoding center, probably blocks exit of the E-site tRNA. This chain is Small ribosomal subunit protein uS7, found in Borrelia hermsii (strain HS1 / DAH).